Consider the following 255-residue polypeptide: Hydroxyacylglutathione hydrolase (255 aa).

The Zn(2+) site is built by His-56, His-58, Asp-60, His-61, His-114, Asp-133, and His-171.

Belongs to the metallo-beta-lactamase superfamily. Glyoxalase II family. Monomer. Zn(2+) serves as cofactor.

The catalysed reaction is an S-(2-hydroxyacyl)glutathione + H2O = a 2-hydroxy carboxylate + glutathione + H(+). The protein operates within secondary metabolite metabolism; methylglyoxal degradation; (R)-lactate from methylglyoxal: step 2/2. In terms of biological role, thiolesterase that catalyzes the hydrolysis of S-D-lactoyl-glutathione to form glutathione and D-lactic acid. In Nitrobacter hamburgensis (strain DSM 10229 / NCIMB 13809 / X14), this protein is Hydroxyacylglutathione hydrolase.